A 375-amino-acid chain; its full sequence is DNA replication and repair protein RecF (375 aa).

ATP is bound at residue 30-37 (GNNGSGKS).

This sequence belongs to the RecF family.

Its subcellular location is the cytoplasm. Its function is as follows. The RecF protein is involved in DNA metabolism; it is required for DNA replication and normal SOS inducibility. RecF binds preferentially to single-stranded, linear DNA. It also seems to bind ATP. This is DNA replication and repair protein RecF from Hahella chejuensis (strain KCTC 2396).